Reading from the N-terminus, the 557-residue chain is CCR4-NOT transcription complex subunit 6 (557 aa).

LRR repeat units lie at residues 52–73 (HLTA…IAKL), 75–96 (NLVY…LGNM), 98–120 (SLRE…GKLF), and 121–143 (QLQT…CLEP). The segment at 153–557 (LLDNLSGTAK…VNGIHLPGRR (405 aa)) is nuclease domain. Glu-240 serves as a coordination point for Mg(2+). Glu-240, Glu-276, His-361, and Pro-366 together coordinate substrate. Asp-412 provides a ligand contact to Mg(2+). Asp-412 functions as the Proton donor/acceptor in the catalytic mechanism. The substrate site is built by Asn-414, Asn-481, and Phe-486.

This sequence belongs to the CCR4/nocturin family. In terms of assembly, component of the CCR4-NOT complex; distinct complexes seem to exist that differ in the participation of probably mutually exclusive catalytic subunits; the complex contains two deadenylase subunits, CNOT6 or CNOT6L, and CNOT7 or CNOT8. Interacts with CNOT7 and CNOT8. Interacts with UNR. Interacts with ZFP36L1 (via N-terminus). Interacts with ZNF335. Mg(2+) serves as cofactor.

It localises to the cytoplasm. The protein resides in the nucleus. It carries out the reaction Exonucleolytic cleavage of poly(A) to 5'-AMP.. Poly(A) nuclease with 3'-5' RNase activity. Catalytic component of the CCR4-NOT complex which is one of the major cellular mRNA deadenylases and is linked to various cellular processes including bulk mRNA degradation, miRNA-mediated repression, translational repression during translational initiation and general transcription regulation. Additional complex functions may be a consequence of its influence on mRNA expression. Involved in mRNA decay mediated by the major-protein-coding determinant of instability (mCRD) of the FOS gene in the cytoplasm. In the presence of ZNF335, enhances ligand-dependent transcriptional activity of nuclear hormone receptors. Mediates cell proliferation and cell survival and prevents cellular senescence. The chain is CCR4-NOT transcription complex subunit 6 (Cnot6) from Mus musculus (Mouse).